The following is a 189-amino-acid chain: GTPase NRas (189 aa).

GTP contacts are provided by residues 10–18 (GAGGVGKSA) and 29–30 (VD). The short motif at 32-40 (YDPTIEDSY) is the Effector region element. GTP is bound at residue 57-61 (DTAGQ). At S89 the chain carries Phosphoserine. Position 116 to 119 (116 to 119 (NKCD)) interacts with GTP. Positions 166–185 (YRMKKLNSSEDGTQGCMGLP) are hypervariable region. K170 participates in a covalent cross-link: Glycyl lysine isopeptide (Lys-Gly) (interchain with G-Cter in ubiquitin). Residue C181 is the site of S-palmitoyl cysteine attachment. C186 carries the S-farnesyl cysteine lipid modification. A propeptide spans 187–189 (VVM) (removed in mature form).

It belongs to the small GTPase superfamily. Ras family. As to quaternary structure, interacts (active GTP-bound form preferentially) with RGS14. Interacts (active GTP-bound form) with RASSF7. Interacts (active GTP-bound form) with both SHOC2 and PP1c (all isoforms) to form a tertiary complex; SHOC2 and PP1c preferably bind M-Ras/MRAS, but they also bind K-Ras/KRAS, N-Ras/NRAS and H-Ras/HRAS. In terms of processing, palmitoylated by the ZDHHC9-GOLGA7 complex. Depalmitoylated by ABHD17A, ABHD17B and ABHD17C. A continuous cycle of de- and re-palmitoylation regulates rapid exchange between plasma membrane and Golgi. Post-translationally, acetylation at Lys-104 prevents interaction with guanine nucleotide exchange factors (GEFs). Ubiquitinated by the BCR(LZTR1) E3 ubiquitin ligase complex at Lys-170 in a non-degradative manner, leading to inhibit Ras signaling by decreasing Ras association with membranes. In terms of processing, phosphorylation at Ser-89 enhances NRAS association with its downstream effectors.

The protein resides in the cell membrane. It is found in the golgi apparatus membrane. The enzyme catalyses GTP + H2O = GDP + phosphate + H(+). Its activity is regulated as follows. Alternates between an inactive form bound to GDP and an active form bound to GTP. Activated by a guanine nucleotide-exchange factor (GEF) and inactivated by a GTPase-activating protein (GAP). In terms of biological role, ras proteins bind GDP/GTP and possess intrinsic GTPase activity. This chain is GTPase NRas (Nras), found in Rattus norvegicus (Rat).